Consider the following 82-residue polypeptide: MGLSTTHLIIFLVIIVLIFGTKKLKNIGSDLGGAVKGFKDGMKTGEKTEADAAAAKAAEPAAQVSAEKRIDTQTIDVEAKTK.

A helical membrane pass occupies residues 1–21; the sequence is MGLSTTHLIIFLVIIVLIFGT.

It belongs to the TatA/E family. In terms of assembly, the Tat system comprises two distinct complexes: a TatABC complex, containing multiple copies of TatA, TatB and TatC subunits, and a separate TatA complex, containing only TatA subunits. Substrates initially bind to the TatABC complex, which probably triggers association of the separate TatA complex to form the active translocon.

The protein resides in the cell inner membrane. Functionally, part of the twin-arginine translocation (Tat) system that transports large folded proteins containing a characteristic twin-arginine motif in their signal peptide across membranes. TatA could form the protein-conducting channel of the Tat system. The protein is Sec-independent protein translocase protein TatA of Leptothrix cholodnii (strain ATCC 51168 / LMG 8142 / SP-6) (Leptothrix discophora (strain SP-6)).